A 679-amino-acid chain; its full sequence is Protein hook (679 aa).

Positions 6 to 123 constitute a Calponin-homology (CH) domain; the sequence is NEMYYSLLEW…RLLQLVLGCA (118 aa). Coiled coils occupy residues 135-437 and 480-574; these read EIMC…LKCG and QTAL…QEIL.

The protein belongs to the hook family. Homodimer. Interacts with microtubules via its N-terminus.

It is found in the cytoplasm. Its subcellular location is the cytoskeleton. It localises to the endosome. The protein localises to the synapse. Involved in endocytic trafficking by stabilizing organelles of the endocytic pathway. Probably acts as a cytoskeletal linker protein required to tether endosome vesicles to the cytoskeleton. Involved in modulation of endocytosis at stages required for down-regulation of membrane proteins that control synapse size. Not involved in synaptic vesicle recycling. Required in R7 cells for boss endocytosis into multivesicular bodies (MVBs). Has a role in regulating adult longevity. The protein is Protein hook of Drosophila erecta (Fruit fly).